The sequence spans 446 residues: Tubulin beta-6 chain (446 aa).

The MREI motif signature appears at 1–4; it reads MREI. Positions 11, 69, 138, 142, 143, and 144 each coordinate GTP. Glu-69 contributes to the Mg(2+) binding site. Ser-172 carries the post-translational modification Phosphoserine; by CDK1. GTP-binding residues include Asn-204 and Asn-226. Glu-438 bears the 5-glutamyl polyglutamate mark.

Belongs to the tubulin family. Dimer of alpha and beta chains. A typical microtubule is a hollow water-filled tube with an outer diameter of 25 nm and an inner diameter of 15 nM. Alpha-beta heterodimers associate head-to-tail to form protofilaments running lengthwise along the microtubule wall with the beta-tubulin subunit facing the microtubule plus end conferring a structural polarity. Microtubules usually have 13 protofilaments but different protofilament numbers can be found in some organisms and specialized cells. Mg(2+) is required as a cofactor. In terms of processing, some glutamate residues at the C-terminus are polyglutamylated, resulting in polyglutamate chains on the gamma-carboxyl group. Polyglutamylation plays a key role in microtubule severing by spastin (SPAST). SPAST preferentially recognizes and acts on microtubules decorated with short polyglutamate tails: severing activity by SPAST increases as the number of glutamates per tubulin rises from one to eight, but decreases beyond this glutamylation threshold. Glutamylation is also involved in cilia motility. Some glutamate residues at the C-terminus are monoglycylated but not polyglycylated due to the absence of functional TTLL10 in human. Monoglycylation is mainly limited to tubulin incorporated into cilia and flagella axonemes, which is required for their stability and maintenance. Flagella glycylation controls sperm motility. Both polyglutamylation and monoglycylation can coexist on the same protein on adjacent residues, and lowering glycylation levels increases polyglutamylation, and reciprocally. Post-translationally, phosphorylated on Ser-172 by CDK1 during the cell cycle, from metaphase to telophase, but not in interphase. This phosphorylation inhibits tubulin incorporation into microtubules. Ubiquitous. Maximal expression in breast and lung, where it represents around 10% of all beta-tubulins. Largely decreased expression in most cancerous tissues.

It is found in the cytoplasm. The protein resides in the cytoskeleton. Tubulin is the major constituent of microtubules, a cylinder consisting of laterally associated linear protofilaments composed of alpha- and beta-tubulin heterodimers. Microtubules grow by the addition of GTP-tubulin dimers to the microtubule end, where a stabilizing cap forms. Below the cap, tubulin dimers are in GDP-bound state, owing to GTPase activity of alpha-tubulin. The chain is Tubulin beta-6 chain (TUBB6) from Homo sapiens (Human).